The sequence spans 159 residues: Disease resistance response protein Pi176 (159 aa).

It belongs to the BetVI family.

This is Disease resistance response protein Pi176 from Pisum sativum (Garden pea).